Consider the following 762-residue polypeptide: MAIQTSNLGYPRIGLQREWKKTLEAFWSNKINEEQFLTTMKEIRLQHVKVQQEKGIELIPIGDFTYYDHVLDTAYMLGFIPSRFSEFTSYLDVYFAMARGSKDHVASEMTKWFNTNYHYIVPEYEEGLQISLKDNRPLRLYEEAKQELGVDGKPVILGPYTFLKLAKGYTQEQFATILKQLVAPYVQLLSELHAAGAQIIQVDEPIFASLTKEEVQQAKEIYEAIRKEVPNATLLLQTYFDSVEENYEEIITFPVSSIGLDFVHGKEGNLNAISKYGFPADKTLAVGCIDGRNIWRADLDEVLTLFTTLQKQVQTKDLIVQPSCSLLHTPIDKTEETHLSTELFDALAFANQKLEELVLIHSALTQGTESISNELETYRNVHHTIRSSAARNREDVKAARTALKEEDFSRPLPFEKRYELQQVALKLPLLPTTTIGSFPQTTEVRQTRKEWRNGIISNEQYEQFIEKETEKWIRYQEEIGLDVLVHGEFERTDMVEYFGERLAGFSFTKNGWVQSYGSRCVKPPVIYGDVAFINGMTIKETVYAQSLTEKVVKGMLTGPVTILNWSFVRNDIPRKEVSYQIALALRHEIELLESSGIRVIQVDEPALREGMPLKEKDWDAYITWAVQSFLLATSSVANETQIHTHMCYSNFEDIVDAIRALDADVISIETSRSHGEFIDTLKHTTYEKGIGLGVYDIHSPRVPSKDEMYEIVEQSLQVCDPKYFWINPDCGLKTRRTEEVIPALEHMVQAAKDARSLLKTNA.

Residues 17 to 20 and lysine 111 contribute to the 5-methyltetrahydropteroyltri-L-glutamate site; that span reads REWK. Residues 435–437 and glutamate 488 contribute to the L-homocysteine site; that span reads IGS. L-methionine contacts are provided by residues 435–437 and glutamate 488; that span reads IGS. Residues 519–520 and tryptophan 565 each bind 5-methyltetrahydropteroyltri-L-glutamate; that span reads RC. L-homocysteine is bound at residue aspartate 603. Aspartate 603 provides a ligand contact to L-methionine. Glutamate 609 lines the 5-methyltetrahydropteroyltri-L-glutamate pocket. Residues histidine 645, cysteine 647, and glutamate 669 each contribute to the Zn(2+) site. The Proton donor role is filled by histidine 698. Cysteine 730 lines the Zn(2+) pocket.

This sequence belongs to the vitamin-B12 independent methionine synthase family. Zn(2+) serves as cofactor.

The catalysed reaction is 5-methyltetrahydropteroyltri-L-glutamate + L-homocysteine = tetrahydropteroyltri-L-glutamate + L-methionine. Its pathway is amino-acid biosynthesis; L-methionine biosynthesis via de novo pathway; L-methionine from L-homocysteine (MetE route): step 1/1. In terms of biological role, catalyzes the transfer of a methyl group from 5-methyltetrahydrofolate to homocysteine resulting in methionine formation. The polypeptide is 5-methyltetrahydropteroyltriglutamate--homocysteine methyltransferase (Bacillus thuringiensis (strain Al Hakam)).